Here is a 355-residue protein sequence, read N- to C-terminus: Serum paraoxonase/arylesterase 1 (355 aa).

A disulfide bridge connects residues Cys-42 and Cys-353. Ca(2+)-binding residues include Glu-53 and Asp-54. The active-site Proton acceptor is His-115. Ile-117, Asn-168, Asp-169, and Asn-224 together coordinate Ca(2+). Asn-253 carries an N-linked (GlcNAc...) asparagine glycan. Asp-269 and Asn-270 together coordinate Ca(2+). N-linked (GlcNAc...) asparagine glycans are attached at residues Asn-270 and Asn-324.

This sequence belongs to the paraoxonase family. In terms of assembly, homodimer. Interacts with CLU. The cofactor is Ca(2+). Post-translationally, the signal sequence is not cleaved. In terms of tissue distribution, plasma, liver, kidney, heart, brain, small intestine and lung. In the plasma, associated with HDL.

Its subcellular location is the secreted. The protein resides in the extracellular space. The catalysed reaction is a phenyl acetate + H2O = a phenol + acetate + H(+). The enzyme catalyses An aryl dialkyl phosphate + H2O = dialkyl phosphate + an aryl alcohol.. It carries out the reaction an N-acyl-L-homoserine lactone + H2O = an N-acyl-L-homoserine + H(+). Functionally, hydrolyzes the toxic metabolites of a variety of organophosphorus insecticides. Capable of hydrolyzing a broad spectrum of organophosphate substrates and lactones, and a number of aromatic carboxylic acid esters. Mediates an enzymatic protection of low density lipoproteins against oxidative modification. This chain is Serum paraoxonase/arylesterase 1 (Pon1), found in Mus musculus (Mouse).